An 83-amino-acid polypeptide reads, in one-letter code: Small ribosomal subunit protein bS18 (83 aa).

It belongs to the bacterial ribosomal protein bS18 family. As to quaternary structure, part of the 30S ribosomal subunit. Forms a tight heterodimer with protein bS6.

Its function is as follows. Binds as a heterodimer with protein bS6 to the central domain of the 16S rRNA, where it helps stabilize the platform of the 30S subunit. The chain is Small ribosomal subunit protein bS18 from Cytophaga hutchinsonii (strain ATCC 33406 / DSM 1761 / CIP 103989 / NBRC 15051 / NCIMB 9469 / D465).